A 581-amino-acid chain; its full sequence is Proline--tRNA ligase (581 aa).

This sequence belongs to the class-II aminoacyl-tRNA synthetase family. ProS type 1 subfamily. In terms of assembly, homodimer.

Its subcellular location is the cytoplasm. It catalyses the reaction tRNA(Pro) + L-proline + ATP = L-prolyl-tRNA(Pro) + AMP + diphosphate. Functionally, catalyzes the attachment of proline to tRNA(Pro) in a two-step reaction: proline is first activated by ATP to form Pro-AMP and then transferred to the acceptor end of tRNA(Pro). As ProRS can inadvertently accommodate and process non-cognate amino acids such as alanine and cysteine, to avoid such errors it has two additional distinct editing activities against alanine. One activity is designated as 'pretransfer' editing and involves the tRNA(Pro)-independent hydrolysis of activated Ala-AMP. The other activity is designated 'posttransfer' editing and involves deacylation of mischarged Ala-tRNA(Pro). The misacylated Cys-tRNA(Pro) is not edited by ProRS. This Rhodococcus erythropolis (strain PR4 / NBRC 100887) protein is Proline--tRNA ligase.